Reading from the N-terminus, the 108-residue chain is UPF0060 membrane protein KPN78578_15550 (108 aa).

4 consecutive transmembrane segments (helical) span residues 6–26 (LLFF…WLWL), 29–49 (GATP…VWLL), 61–81 (AAYG…VDGV), and 86–106 (YDWA…AGWG).

Belongs to the UPF0060 family.

It localises to the cell inner membrane. The protein is UPF0060 membrane protein KPN78578_15550 of Klebsiella pneumoniae subsp. pneumoniae (strain ATCC 700721 / MGH 78578).